A 188-amino-acid chain; its full sequence is Cell division protein ZapC (188 aa).

The protein belongs to the ZapC family. As to quaternary structure, interacts directly with FtsZ.

Its subcellular location is the cytoplasm. Contributes to the efficiency of the cell division process by stabilizing the polymeric form of the cell division protein FtsZ. Acts by promoting interactions between FtsZ protofilaments and suppressing the GTPase activity of FtsZ. The sequence is that of Cell division protein ZapC from Psychromonas ingrahamii (strain DSM 17664 / CCUG 51855 / 37).